A 252-amino-acid polypeptide reads, in one-letter code: Imidazole glycerol phosphate synthase subunit HisF (252 aa).

Active-site residues include aspartate 11 and aspartate 130.

The protein belongs to the HisA/HisF family. As to quaternary structure, heterodimer of HisH and HisF.

The protein localises to the cytoplasm. It carries out the reaction 5-[(5-phospho-1-deoxy-D-ribulos-1-ylimino)methylamino]-1-(5-phospho-beta-D-ribosyl)imidazole-4-carboxamide + L-glutamine = D-erythro-1-(imidazol-4-yl)glycerol 3-phosphate + 5-amino-1-(5-phospho-beta-D-ribosyl)imidazole-4-carboxamide + L-glutamate + H(+). Its pathway is amino-acid biosynthesis; L-histidine biosynthesis; L-histidine from 5-phospho-alpha-D-ribose 1-diphosphate: step 5/9. IGPS catalyzes the conversion of PRFAR and glutamine to IGP, AICAR and glutamate. The HisF subunit catalyzes the cyclization activity that produces IGP and AICAR from PRFAR using the ammonia provided by the HisH subunit. This is Imidazole glycerol phosphate synthase subunit HisF from Bacillus thuringiensis (strain Al Hakam).